The following is a 637-amino-acid chain: tRNA uridine 5-carboxymethylaminomethyl modification enzyme MnmG (637 aa).

FAD-binding positions include 15–20 (GAGHAG), valine 127, and serine 182. Residue 274 to 288 (GPRYCPSIEDKVVRF) participates in NAD(+) binding. Residue glutamine 371 coordinates FAD.

The protein belongs to the MnmG family. As to quaternary structure, homodimer. Heterotetramer of two MnmE and two MnmG subunits. FAD is required as a cofactor.

It localises to the cytoplasm. Its function is as follows. NAD-binding protein involved in the addition of a carboxymethylaminomethyl (cmnm) group at the wobble position (U34) of certain tRNAs, forming tRNA-cmnm(5)s(2)U34. This Heliobacterium modesticaldum (strain ATCC 51547 / Ice1) protein is tRNA uridine 5-carboxymethylaminomethyl modification enzyme MnmG.